The sequence spans 250 residues: Peptidyl-tRNA hydrolase (250 aa).

Residue Y14 participates in tRNA binding. H19 (proton acceptor) is an active-site residue. The tRNA site is built by F64, N66, and N112. Positions 192-250 (MGDGNQRPGGVKTDPAQLEKAPPKAQSHIRQARQNQKKPNIPESGPMAEMLKKLLGKKD) are disordered. The span at 219–229 (HIRQARQNQKK) shows a compositional bias: polar residues. Residues 241-250 (MLKKLLGKKD) are compositionally biased toward basic and acidic residues.

The protein belongs to the PTH family. As to quaternary structure, monomer.

The protein localises to the cytoplasm. It catalyses the reaction an N-acyl-L-alpha-aminoacyl-tRNA + H2O = an N-acyl-L-amino acid + a tRNA + H(+). Its function is as follows. Hydrolyzes ribosome-free peptidyl-tRNAs (with 1 or more amino acids incorporated), which drop off the ribosome during protein synthesis, or as a result of ribosome stalling. Functionally, catalyzes the release of premature peptidyl moieties from peptidyl-tRNA molecules trapped in stalled 50S ribosomal subunits, and thus maintains levels of free tRNAs and 50S ribosomes. This is Peptidyl-tRNA hydrolase from Brucella abortus (strain 2308).